The following is a 503-amino-acid chain: Betaine aldehyde dehydrogenase 2 (503 aa).

161 to 170 (WNYPLLMATW) is a binding site for betaine aldehyde. Position 238-243 (238-243 (GSYETG)) interacts with NAD(+). Betaine aldehyde-binding positions include E260, 292-295 (QICS), and C453. Residues E260 and C294 contribute to the active site. 4-aminobutanal contacts are provided by residues 260–261 (EL) and C294. W459 contacts 4-aminobutanal. The short motif at 501–503 (SKL) is the Microbody targeting signal element.

This sequence belongs to the aldehyde dehydrogenase family. Homodimer.

The protein resides in the peroxisome. Its subcellular location is the cytoplasm. It catalyses the reaction betaine aldehyde + NAD(+) + H2O = glycine betaine + NADH + 2 H(+). Its pathway is amine and polyamine biosynthesis; betaine biosynthesis via choline pathway; betaine from betaine aldehyde: step 1/1. Functionally, dehydrogenase that can use N-acetyl-c-aminobutyraldehyde (NAGABald), gamma-guanidinobutyraldehyde (GGBald), betaine aldehyde (Bet-ald), gamma-aminobutyraldehyde (GAB-ald), acetaldehyde, 4-aminobutylaldehyde (AB-ald), 3-aminopropionaldehyde (AP-ald), 4-N-trimethylaminobutyraldehyde (TMAB-ald) and 3-N-trimethylaminopropionaldehyde (TMAP-ald) as substrates. Catalyzes the oxidation of GAB-ald more efficiently than Bet-ald. Mediates the conversion of GAB-ald into gamma-aminobutyric acid (GABA), and prevents the formation of 2-acetyl-1-pyrroline (2AP) which gives fragrant rice its aromatic properties. The chain is Betaine aldehyde dehydrogenase 2 (BADH2) from Oryza sativa subsp. indica (Rice).